The sequence spans 610 residues: Terminase, large subunit (610 aa).

A ssDNA-binding region spans residues arginine 30 to lysine 94. An ATPase activity region spans residues aspartate 131–alanine 301. Residues glutamine 138 and glutamine 143 each contribute to the ATP site. A Walker A motif motif is present at residues serine 161 to threonine 167. Arginine 202 contacts ATP. Residues methionine 251–glutamate 256 carry the Walker B motif motif. The active-site For ATPase activity is glutamate 256. The ATPase coupling motif lies at threonine 285–threonine 287. Residues isoleucine 328–histidine 352 form a binding to the portal protein region. Residues serine 360–phenylalanine 559 are nuclease activity. Positions 401, 458, and 542 each coordinate Mg(2+).

It belongs to the Tequatrovirus large terminase family. Interacts with the terminase small subunit; the active complex is composed of a pentamer of terminase large subunits and a dodecamer of terminase small subunits. Interacts with the portal protein. Interacts with the RNA polymerase sigma factor gp55. Mg(2+) is required as a cofactor. Post-translationally, phosphorylated.

With respect to regulation, stimulated up to 50 to 100-fold by the terminase small subunit. Modestly activated by portal protein and single-stranded binding protein gp32 multimers. Its function is as follows. The terminase large subunit acts as an ATP driven molecular motor necessary for viral DNA translocation into empty capsids and as an endonuclease that cuts the viral genome to initiate and to end a packaging reaction. The terminase lies at a unique vertex of the procapsid and is composed of two subunits, a small terminase subunit involved in viral DNA recognition (packaging sequence), and a large terminase subunit possessing endonucleolytic and ATPase activities. Both terminase subunits heterooligomerize and are docked on the portal protein to form the packaging machine. The terminase large subunit exhibits endonuclease activity and cleaves the viral genome concatemer once the capsid is full (headful packaging). Once the capsid is packaged with the DNA, the terminase complex is substituted by the tail. The polypeptide is Terminase, large subunit (17) (Escherichia coli (Bacteriophage T4)).